The primary structure comprises 228 residues: Orotate phosphoribosyltransferase (228 aa).

5-phospho-alpha-D-ribose 1-diphosphate is bound by residues R107, K108, K111, and 133–141; that span reads EDLTTDGGS. T137 contacts orotate.

It belongs to the purine/pyrimidine phosphoribosyltransferase family. PyrE subfamily. Homodimer. Mg(2+) serves as cofactor.

The catalysed reaction is orotidine 5'-phosphate + diphosphate = orotate + 5-phospho-alpha-D-ribose 1-diphosphate. It functions in the pathway pyrimidine metabolism; UMP biosynthesis via de novo pathway; UMP from orotate: step 1/2. Catalyzes the transfer of a ribosyl phosphate group from 5-phosphoribose 1-diphosphate to orotate, leading to the formation of orotidine monophosphate (OMP). This Jannaschia sp. (strain CCS1) protein is Orotate phosphoribosyltransferase.